An 82-amino-acid chain; its full sequence is Putative antitoxin Saci_0468 (82 aa).

This sequence belongs to the UPF0330 family.

Its function is as follows. Possibly the antitoxin component of a type II toxin-antitoxin (TA) system. The protein is Putative antitoxin Saci_0468 of Sulfolobus acidocaldarius (strain ATCC 33909 / DSM 639 / JCM 8929 / NBRC 15157 / NCIMB 11770).